Reading from the N-terminus, the 467-residue chain is Ribosome biogenesis protein YTM1 (467 aa).

Residues 8–95 (IKIKFFTNEE…ETFLSLEYTR (88 aa)) are ubiquitin-like (UBL) domain. Residues 105–467 (SFNNEDWISS…QINKGSDISK (363 aa)) are sufficient for interaction with ERB1 and association with 66S pre-ribosomes. WD repeat units lie at residues 120-159 (KTLP…EKQY), 161-199 (GHSG…GSIP), 216-255 (GHKA…MTTI), 293-333 (SHTQ…CIDT), 335-374 (STGY…NTTE), 382-422 (GHTN…SLYT), and 432-467 (KGAD…DISK).

Belongs to the WD repeat WDR12/YTM1 family. As to quaternary structure, component of the NOP7 complex, composed of ERB1, NOP7 and YTM1. The complex is held together by ERB1, which interacts with NOP7 via its N-terminal domain and with YTM1 via a high-affinity interaction between the seven-bladed beta-propeller domains of the 2 proteins. The NOP7 complex associates with the 66S pre-ribosome. Interacts (via UBL domain) with MDN1 (via VWFA/MIDAS domain).

Its subcellular location is the nucleus. It is found in the nucleolus. The protein localises to the nucleoplasm. In terms of biological role, component of the NOP7 complex, which is required for maturation of the 25S and 5.8S ribosomal RNAs and formation of the 60S ribosome. This chain is Ribosome biogenesis protein YTM1, found in Scheffersomyces stipitis (strain ATCC 58785 / CBS 6054 / NBRC 10063 / NRRL Y-11545) (Yeast).